Consider the following 143-residue polypeptide: ATP synthase subunit b' (143 aa).

A helical membrane pass occupies residues 6-26 (ATLPFMALQFLLLAAVLNAIF).

The protein belongs to the ATPase B chain family. In terms of assembly, F-type ATPases have 2 components, F(1) - the catalytic core - and F(0) - the membrane proton channel. F(1) has five subunits: alpha(3), beta(3), gamma(1), delta(1), epsilon(1). F(0) has four main subunits: a(1), b(1), b'(1) and c(10-14). The alpha and beta chains form an alternating ring which encloses part of the gamma chain. F(1) is attached to F(0) by a central stalk formed by the gamma and epsilon chains, while a peripheral stalk is formed by the delta, b and b' chains.

The protein localises to the cellular thylakoid membrane. F(1)F(0) ATP synthase produces ATP from ADP in the presence of a proton or sodium gradient. F-type ATPases consist of two structural domains, F(1) containing the extramembraneous catalytic core and F(0) containing the membrane proton channel, linked together by a central stalk and a peripheral stalk. During catalysis, ATP synthesis in the catalytic domain of F(1) is coupled via a rotary mechanism of the central stalk subunits to proton translocation. In terms of biological role, component of the F(0) channel, it forms part of the peripheral stalk, linking F(1) to F(0). The b'-subunit is a diverged and duplicated form of b found in plants and photosynthetic bacteria. The chain is ATP synthase subunit b' from Nostoc punctiforme (strain ATCC 29133 / PCC 73102).